Here is a 173-residue protein sequence, read N- to C-terminus: Cytochrome c-type biogenesis protein CcmE (173 aa).

Residues 1–8 are Cytoplasmic-facing; sequence MNPRRKSR. A helical; Signal-anchor for type II membrane protein transmembrane segment spans residues 9–29; sequence FKLVIFVVLGIAIASGLMLYA. At 30–173 the chain is on the periplasmic side; sequence LRQNIDLFYT…RDRQEKEGAK (144 aa). Heme-binding residues include histidine 131 and tyrosine 135. The disordered stretch occupies residues 139-173; it reads ELGEKMQKVHKPMGIKAADLKGESERDRQEKEGAK. Residues 156–173 show a composition bias toward basic and acidic residues; sequence ADLKGESERDRQEKEGAK.

The protein belongs to the CcmE/CycJ family.

The protein localises to the cell inner membrane. Its function is as follows. Heme chaperone required for the biogenesis of c-type cytochromes. Transiently binds heme delivered by CcmC and transfers the heme to apo-cytochromes in a process facilitated by CcmF and CcmH. The sequence is that of Cytochrome c-type biogenesis protein CcmE from Haemophilus influenzae (strain 86-028NP).